The primary structure comprises 152 residues: Ribosome maturation factor RimP (152 aa).

This sequence belongs to the RimP family.

It is found in the cytoplasm. Its function is as follows. Required for maturation of 30S ribosomal subunits. This is Ribosome maturation factor RimP from Elusimicrobium minutum (strain Pei191).